Reading from the N-terminus, the 264-residue chain is ATP synthase subunit a (264 aa).

6 helical membrane passes run 32–52 (IDSLFFSVGLGVLFLWLFHSV), 89–109 (VIAPLALTIFVWVFMMNFMDM), 134–154 (DLNITFSMAIGVFLLIIYYSI), 177–197 (IPVNFLLETVTLIAKPISLAL), 208–228 (LIFILIALMYGANWALSTLGV), and 235–255 (LIFHILVITLQAFIFMMLTIV).

It belongs to the ATPase A chain family. As to quaternary structure, F-type ATPases have 2 components, CF(1) - the catalytic core - and CF(0) - the membrane proton channel. CF(1) has five subunits: alpha(3), beta(3), gamma(1), delta(1), epsilon(1). CF(0) has three main subunits: a(1), b(2) and c(9-12). The alpha and beta chains form an alternating ring which encloses part of the gamma chain. CF(1) is attached to CF(0) by a central stalk formed by the gamma and epsilon chains, while a peripheral stalk is formed by the delta and b chains.

It is found in the cell inner membrane. Its function is as follows. Key component of the proton channel; it plays a direct role in the translocation of protons across the membrane. The chain is ATP synthase subunit a from Shewanella piezotolerans (strain WP3 / JCM 13877).